Reading from the N-terminus, the 433-residue chain is Acetyl-CoA acetyltransferase erg10A, mitochondrial (433 aa).

The N-terminal 34 residues, 1–34 (MAIQTTTGLAARLVAKRATFPASRRNFSASRSAL), are a transit peptide targeting the mitochondrion. Catalysis depends on Cys-124, which acts as the Acyl-thioester intermediate. Tyr-219 contributes to the K(+) binding site. The CoA site is built by Asn-229 and Lys-262. Ala-280 contacts K(+). Ser-284 is a binding site for CoA. Residues His-387 and Cys-415 each act as proton acceptor in the active site. Chloride is bound at residue Asn-416.

This sequence belongs to the thiolase-like superfamily. Thiolase family. Homotetramer. Requires K(+) as cofactor.

The protein resides in the mitochondrion. The catalysed reaction is 2 acetyl-CoA = acetoacetyl-CoA + CoA. It participates in metabolic intermediate biosynthesis; (R)-mevalonate biosynthesis; (R)-mevalonate from acetyl-CoA: step 1/3. In terms of biological role, mitochondrial acetyl-CoA acetyltransferase that catalyzes both the formation and degradation of acetoacetyl-CoA. Has no overlapping function with erg10B and seems not to be involved in ergosterol biosynthesis. Plays an important role in growth, morphogenesis and maintaining mitochondrial function including the response to oxidative stresses. In Aspergillus fumigatus (strain ATCC MYA-4609 / CBS 101355 / FGSC A1100 / Af293) (Neosartorya fumigata), this protein is Acetyl-CoA acetyltransferase erg10A, mitochondrial.